A 234-amino-acid polypeptide reads, in one-letter code: uncharacterized protein (234 aa).

LRR repeat units follow at residues 44 to 63, 64 to 84, 85 to 107, and 111 to 134; these read LEFLSKINGGLTSISDLPKL, KLRKLELRVSGGLEVLAEKCP, NLTHLYLSGNKIKDLSTIEPLKQ, and LKSLDLFNCEVTNLNDYGENVFKL. The segment at 161–234 is disordered; that stretch reads EGLDDEEEGE…GEEERGQKRK (74 aa). A compositionally biased stretch (acidic residues) spans 163–226; sequence LDDEEEGEHE…GEEDEEELGE (64 aa).

Belongs to the ANP32 family. As to expression, expressed in activated stem cells, such as mobilized CD34+ cells and cord blood CD34+ cells, but not in resting bone marrow CD34+ cells. Expressed in a variety of neoplastic cell lines, mainly in prostatic adenocarcinoma cell lines. Not expressed in normal prostatic tissue.

This is an uncharacterized protein from Homo sapiens (Human).